A 297-amino-acid polypeptide reads, in one-letter code: Formylmethanofuran--tetrahydromethanopterin formyltransferase (297 aa).

It belongs to the FTR family. As to quaternary structure, homotetramer.

The protein resides in the cytoplasm. It catalyses the reaction N-formylmethanofuran + 5,6,7,8-tetrahydromethanopterin + H(+) = N(5)-formyl-5,6,7,8-tetrahydromethanopterin + methanofuran. It participates in one-carbon metabolism; methanogenesis from CO(2); 5,10-methenyl-5,6,7,8-tetrahydromethanopterin from CO(2): step 2/3. Catalyzes the reversible transfer of a formyl group from formylmethanofuran (formyl-MFR) to tetrahydromethanopterin (H(4)MPT) to produce 5-formyl tetrahydromethanopterin (5-formyl-H(4)MPT) and methanofuran (MFR). In Methanothermobacter thermautotrophicus (strain ATCC 29096 / DSM 1053 / JCM 10044 / NBRC 100330 / Delta H) (Methanobacterium thermoautotrophicum), this protein is Formylmethanofuran--tetrahydromethanopterin formyltransferase.